The following is a 355-amino-acid chain: Arginine kinase (355 aa).

The 85-residue stretch at 6-90 (TLEKLEAGFS…FDPIIEDYHN (85 aa)) folds into the Phosphagen kinase N-terminal domain. Residue 63–67 (GVGIY) coordinates substrate. The 238-residue stretch at 118–355 (FVVSTRVRCG…AELIKIEKSL (238 aa)) folds into the Phosphagen kinase C-terminal domain. ATP contacts are provided by residues 121–125 (STRVR) and His184. A substrate-binding site is contributed by Glu224. Arg228 lines the ATP pocket. Cys270 provides a ligand contact to substrate. Residues 279 to 283 (RASVH) and 308 to 313 (RGTRGE) each bind ATP. Glu313 is a binding site for substrate.

This sequence belongs to the ATP:guanido phosphotransferase family.

The enzyme catalyses L-arginine + ATP = N(omega)-phospho-L-arginine + ADP + H(+). The sequence is that of Arginine kinase (ARGK) from Plodia interpunctella (Indianmeal moth).